Consider the following 234-residue polypeptide: Leucyl/phenylalanyl-tRNA--protein transferase (234 aa).

This sequence belongs to the L/F-transferase family.

The protein resides in the cytoplasm. The enzyme catalyses N-terminal L-lysyl-[protein] + L-leucyl-tRNA(Leu) = N-terminal L-leucyl-L-lysyl-[protein] + tRNA(Leu) + H(+). It carries out the reaction N-terminal L-arginyl-[protein] + L-leucyl-tRNA(Leu) = N-terminal L-leucyl-L-arginyl-[protein] + tRNA(Leu) + H(+). The catalysed reaction is L-phenylalanyl-tRNA(Phe) + an N-terminal L-alpha-aminoacyl-[protein] = an N-terminal L-phenylalanyl-L-alpha-aminoacyl-[protein] + tRNA(Phe). Functions in the N-end rule pathway of protein degradation where it conjugates Leu, Phe and, less efficiently, Met from aminoacyl-tRNAs to the N-termini of proteins containing an N-terminal arginine or lysine. In Escherichia fergusonii (strain ATCC 35469 / DSM 13698 / CCUG 18766 / IAM 14443 / JCM 21226 / LMG 7866 / NBRC 102419 / NCTC 12128 / CDC 0568-73), this protein is Leucyl/phenylalanyl-tRNA--protein transferase.